The following is a 262-amino-acid chain: MAPLKSLLLGASLATLALSTPLATDAENLYARQFGTGSTANELEQGSCKDVTLIFARGSTELGNMGTVIGPPLCDNLKSKLGSDKVACQGVGGQYSAGLVQNALPQNTDPGSISAAKQMFEEANSKCPNTKIVAGGYSQGSAVIDNAVQELSTTVKDQVKGVVLFGFTRNVQDHGQIPNYPKDDVKVYCAVGDLVCDDTLVVTAMHLTYGMDAGDAASFLAEKVQSSSSSTTSSSSDAASSSSAAGTSSSGLSGLSSFFGGL.

Positions 1 to 19 are cleaved as a signal peptide; sequence MAPLKSLLLGASLATLALS. Disulfide bonds link C48–C127 and C74–C88. S138 acts as the Nucleophile in catalysis. Residues C189 and C196 are joined by a disulfide bond. D193 is a catalytic residue. Residue H206 is the Proton donor/acceptor of the active site. Residues 228-262 form a disordered region; the sequence is SSSTTSSSSDAASSSSAAGTSSSGLSGLSSFFGGL.

This sequence belongs to the cutinase family.

It localises to the secreted. It carries out the reaction cutin + H2O = cutin monomers.. Functionally, catalyzes the hydrolysis of complex carboxylic polyesters found in the cell wall of plants. Degrades cutin, a macromolecule that forms the structure of the plant cuticle. The polypeptide is Probable cutinase 1 (Aspergillus niger (strain ATCC MYA-4892 / CBS 513.88 / FGSC A1513)).